A 954-amino-acid polypeptide reads, in one-letter code: Glycine dehydrogenase (decarboxylating) (954 aa).

Position 704 is an N6-(pyridoxal phosphate)lysine (K704).

Belongs to the GcvP family. As to quaternary structure, the glycine cleavage system is composed of four proteins: P, T, L and H. The cofactor is pyridoxal 5'-phosphate.

The catalysed reaction is N(6)-[(R)-lipoyl]-L-lysyl-[glycine-cleavage complex H protein] + glycine + H(+) = N(6)-[(R)-S(8)-aminomethyldihydrolipoyl]-L-lysyl-[glycine-cleavage complex H protein] + CO2. Its function is as follows. The glycine cleavage system catalyzes the degradation of glycine. The P protein binds the alpha-amino group of glycine through its pyridoxal phosphate cofactor; CO(2) is released and the remaining methylamine moiety is then transferred to the lipoamide cofactor of the H protein. This Rhizobium etli (strain ATCC 51251 / DSM 11541 / JCM 21823 / NBRC 15573 / CFN 42) protein is Glycine dehydrogenase (decarboxylating).